The following is a 467-amino-acid chain: ATP synthase subunit beta, sodium ion specific (467 aa).

Residue 151–158 (GGAGVGKT) coordinates ATP.

It belongs to the ATPase alpha/beta chains family. As to quaternary structure, F-type ATPases have 2 components, CF(1) - the catalytic core - and CF(0) - the membrane proton channel. CF(1) has five subunits: alpha(3), beta(3), gamma(1), delta(1), epsilon(1). CF(0) has three main subunits: a, b and c.

It localises to the cell membrane. The enzyme catalyses 4 Na(+)(in) + ATP + H2O = 4 Na(+)(out) + ADP + phosphate + H(+). Its function is as follows. Produces ATP from ADP in the presence of a sodium ion gradient across the membrane. The beta chain is the catalytic subunit. This is ATP synthase subunit beta, sodium ion specific from Propionigenium modestum.